The sequence spans 206 residues: LexA repressor (206 aa).

The segment at residues 28-48 is a DNA-binding region (H-T-H motif); the sequence is VREIGEAVGLASSSTVHGHLD. Active-site for autocatalytic cleavage activity residues include serine 128 and lysine 166.

It belongs to the peptidase S24 family. Homodimer.

It carries out the reaction Hydrolysis of Ala-|-Gly bond in repressor LexA.. In terms of biological role, represses a number of genes involved in the response to DNA damage (SOS response), including recA and lexA. In the presence of single-stranded DNA, RecA interacts with LexA causing an autocatalytic cleavage which disrupts the DNA-binding part of LexA, leading to derepression of the SOS regulon and eventually DNA repair. This is LexA repressor from Exiguobacterium sp. (strain ATCC BAA-1283 / AT1b).